The chain runs to 440 residues: Probable cytosolic iron-sulfur protein assembly protein 1 (440 aa).

WD repeat units lie at residues 12–51 (AHAE…SSDG), 71–110 (DHKR…SDDE), 148–187 (GHES…DFEC), 193–233 (EHSQ…WCIF), 278–317 (EEDE…PDSA), 326–379 (AHSR…SPSS), and 401–440 (HGVN…VVRD). The span at 107-116 (SDDEEEEDEG) shows a compositional bias: acidic residues. Residues 107–137 (SDDEEEEDEGAQGVYKPAGVDSDGDGDGGKE) are disordered.

This sequence belongs to the WD repeat CIA1 family.

Essential component of the cytosolic iron-sulfur (Fe/S) protein assembly machinery. Required for the maturation of extramitochondrial Fe/S proteins. The chain is Probable cytosolic iron-sulfur protein assembly protein 1 from Cryptococcus neoformans var. neoformans serotype D (strain B-3501A) (Filobasidiella neoformans).